We begin with the raw amino-acid sequence, 242 residues long: Leucyl/phenylalanyl-tRNA--protein transferase (242 aa).

This sequence belongs to the L/F-transferase family.

The protein localises to the cytoplasm. The catalysed reaction is N-terminal L-lysyl-[protein] + L-leucyl-tRNA(Leu) = N-terminal L-leucyl-L-lysyl-[protein] + tRNA(Leu) + H(+). It carries out the reaction N-terminal L-arginyl-[protein] + L-leucyl-tRNA(Leu) = N-terminal L-leucyl-L-arginyl-[protein] + tRNA(Leu) + H(+). The enzyme catalyses L-phenylalanyl-tRNA(Phe) + an N-terminal L-alpha-aminoacyl-[protein] = an N-terminal L-phenylalanyl-L-alpha-aminoacyl-[protein] + tRNA(Phe). Functions in the N-end rule pathway of protein degradation where it conjugates Leu, Phe and, less efficiently, Met from aminoacyl-tRNAs to the N-termini of proteins containing an N-terminal arginine or lysine. The chain is Leucyl/phenylalanyl-tRNA--protein transferase from Edwardsiella ictaluri (strain 93-146).